Consider the following 276-residue polypeptide: Rhomboid protease GlpG (276 aa).

6 consecutive transmembrane segments (helical) span residues 94-114, 142-162, 169-189, 192-212, 229-249, and 250-270; these read GPVTWIVMLACVLVYIAMSLI, IFMHFSLMHILFNLLWWWYLG, LGSGKLIVITVISALLSGYVQ, FSGPWFGGLSGVVYALMGYVW, LIIFALLWIVAGWFDWFGMSM, and ANGAHIAGLIVGLAMAFVDTL. Ser-201 serves as the catalytic Nucleophile. His-254 is a catalytic residue.

The protein belongs to the peptidase S54 family.

The protein resides in the cell inner membrane. It catalyses the reaction Cleaves type-1 transmembrane domains using a catalytic dyad composed of serine and histidine that are contributed by different transmembrane domains.. Rhomboid-type serine protease that catalyzes intramembrane proteolysis. In Salmonella agona (strain SL483), this protein is Rhomboid protease GlpG.